A 550-amino-acid chain; its full sequence is Luciferin 4-monooxygenase (550 aa).

A Microbody targeting signal motif is present at residues 548-550; sequence SKL.

This sequence belongs to the ATP-dependent AMP-binding enzyme family. Mg(2+) is required as a cofactor.

It is found in the peroxisome. It carries out the reaction firefly D-luciferin + ATP + O2 = firefly oxyluciferin + hnu + AMP + CO2 + diphosphate. In terms of biological role, produces green light with a wavelength of 562 nm. This is Luciferin 4-monooxygenase from Photinus pyralis (Common eastern firefly).